The chain runs to 138 residues: Outer membrane protein assembly factor BamE (138 aa).

Residues 1–42 (MSHLTMIKTLNLRPFHSASALRKIVITSILGVAVTMSGCSLL) form the signal peptide.

It belongs to the BamE family. Part of the Bam complex.

It is found in the cell outer membrane. In terms of biological role, part of the outer membrane protein assembly complex, which is involved in assembly and insertion of beta-barrel proteins into the outer membrane. The protein is Outer membrane protein assembly factor BamE of Psychrobacter arcticus (strain DSM 17307 / VKM B-2377 / 273-4).